We begin with the raw amino-acid sequence, 528 residues long: Chromosomal replication initiator protein DnaA (528 aa).

A domain I, interacts with DnaA modulators region spans residues 1–104; the sequence is MNDDPNALAR…PVDDEPESDP (104 aa). The interval 95–158 is disordered; sequence PVDDEPESDP…TDFEEVDDDR (64 aa). The span at 104–123 shows a compositional bias: basic and acidic residues; it reads PPSRDHRPEPEPLHTPRHLE. Residues 105–187 form a domain II region; that stretch reads PSRDHRPEPE…GPAPSATGGN (83 aa). Over residues 149–158 the composition is skewed to acidic residues; that stretch reads TDFEEVDDDR. Residues 188–404 are domain III, AAA+ region; it reads SLNAKYTFDT…GALIRVTAFA (217 aa). Residues Gly-232, Gly-234, Lys-235, and Thr-236 each contribute to the ATP site. The tract at residues 405 to 528 is domain IV, binds dsDNA; that stretch reads SLNRQPLDLT…TARIKQRSKR (124 aa).

Belongs to the DnaA family. In terms of assembly, oligomerizes as a right-handed, spiral filament on DNA at oriC.

It localises to the cytoplasm. Functionally, plays an essential role in the initiation and regulation of chromosomal replication. ATP-DnaA binds to the origin of replication (oriC) to initiate formation of the DNA replication initiation complex once per cell cycle. Binds the DnaA box (a 9 base pair repeat at the origin) and separates the double-stranded (ds)DNA. Forms a right-handed helical filament on oriC DNA; dsDNA binds to the exterior of the filament while single-stranded (ss)DNA is stabiized in the filament's interior. The ATP-DnaA-oriC complex binds and stabilizes one strand of the AT-rich DNA unwinding element (DUE), permitting loading of DNA polymerase. After initiation quickly degrades to an ADP-DnaA complex that is not apt for DNA replication. Binds acidic phospholipids. The sequence is that of Chromosomal replication initiator protein DnaA from Rhodococcus jostii (strain RHA1).